A 271-amino-acid polypeptide reads, in one-letter code: RELT-like protein 1 (271 aa).

Positions 1 to 23 are cleaved as a signal peptide; the sequence is MAPRGLPGSAVLAAAVFVGGAVS. Residues 24-57 are Extracellular-facing; sequence SPLVRSDHSGSHPLPSKTETTPSPTNNNGNGHPE. Positions 27–52 are disordered; the sequence is VRSDHSGSHPLPSKTETTPSPTNNNG. Low complexity predominate over residues 36–52; the sequence is PLPSKTETTPSPTNNNG. Residues 58–78 form a helical membrane-spanning segment; it reads YIAYALVPVFFVMGLFGVLIC. The Cytoplasmic portion of the chain corresponds to 79-271; it reads HLLKKKGYRC…PVKRQQSDSE (193 aa). Phosphoserine occurs at positions 109 and 114. 2 disordered regions span residues 144–168 and 231–271; these read CDPE…LSPG and TKVE…SDSE. Residues 155 to 165 are compositionally biased toward pro residues; the sequence is PGSPPVSPGPL. Positions 231–244 are enriched in basic and acidic residues; it reads TKVEPKSNQKERRS. Residues Ser244 and Ser247 each carry the phosphoserine modification.

This sequence belongs to the RELT family. In terms of assembly, interacts with RELT, RELL2, OXSR1 and PLSCR1.

Its subcellular location is the cell membrane. Its function is as follows. Induces activation of MAPK14/p38 cascade, when overexpressed. Induces apoptosis, when overexpressed. In Bos taurus (Bovine), this protein is RELT-like protein 1 (RELL1).